The chain runs to 276 residues: Diaminopimelate epimerase (276 aa).

The substrate site is built by Asn-13, Gln-46, and Asn-66. The Proton donor role is filled by Cys-75. Substrate contacts are provided by residues 76-77 (GN), Asn-159, Asn-192, and 210-211 (ER). The Proton acceptor role is filled by Cys-219. 220-221 (GT) lines the substrate pocket.

This sequence belongs to the diaminopimelate epimerase family. Homodimer.

The protein resides in the cytoplasm. It carries out the reaction (2S,6S)-2,6-diaminopimelate = meso-2,6-diaminopimelate. It functions in the pathway amino-acid biosynthesis; L-lysine biosynthesis via DAP pathway; DL-2,6-diaminopimelate from LL-2,6-diaminopimelate: step 1/1. Catalyzes the stereoinversion of LL-2,6-diaminopimelate (L,L-DAP) to meso-diaminopimelate (meso-DAP), a precursor of L-lysine and an essential component of the bacterial peptidoglycan. This is Diaminopimelate epimerase from Pseudomonas syringae pv. syringae (strain B728a).